Reading from the N-terminus, the 257-residue chain is 1-(5-phosphoribosyl)-5-[(5-phosphoribosylamino)methylideneamino] imidazole-4-carboxamide isomerase (257 aa).

The protein belongs to the HisA/HisF family.

The protein resides in the cytoplasm. The enzyme catalyses 1-(5-phospho-beta-D-ribosyl)-5-[(5-phospho-beta-D-ribosylamino)methylideneamino]imidazole-4-carboxamide = 5-[(5-phospho-1-deoxy-D-ribulos-1-ylimino)methylamino]-1-(5-phospho-beta-D-ribosyl)imidazole-4-carboxamide. It participates in amino-acid biosynthesis; L-histidine biosynthesis; L-histidine from 5-phospho-alpha-D-ribose 1-diphosphate: step 4/9. In Neurospora crassa (strain ATCC 24698 / 74-OR23-1A / CBS 708.71 / DSM 1257 / FGSC 987), this protein is 1-(5-phosphoribosyl)-5-[(5-phosphoribosylamino)methylideneamino] imidazole-4-carboxamide isomerase (his-7).